Reading from the N-terminus, the 760-residue chain is Xaa-Pro dipeptidyl-peptidase (760 aa).

Active-site charge relay system residues include serine 349, aspartate 469, and histidine 499.

Belongs to the peptidase S15 family. In terms of assembly, homodimer.

It localises to the cytoplasm. The catalysed reaction is Hydrolyzes Xaa-Pro-|- bonds to release unblocked, N-terminal dipeptides from substrates including Ala-Pro-|-p-nitroanilide and (sequentially) Tyr-Pro-|-Phe-Pro-|-Gly-Pro-|-Ile.. Removes N-terminal dipeptides sequentially from polypeptides having unsubstituted N-termini provided that the penultimate residue is proline. This Streptococcus pyogenes serotype M49 (strain NZ131) protein is Xaa-Pro dipeptidyl-peptidase.